A 230-amino-acid chain; its full sequence is Urease accessory protein UreG (230 aa).

The segment at 1–31 is disordered; it reads MPPHFLSADSTGQPHRHADRPKRVRTPGEPL. Basic residues predominate over residues 14–25; sequence PHRHADRPKRVR. A GTP-binding site is contributed by 37-44; that stretch reads GPVGSGKT.

This sequence belongs to the SIMIBI class G3E GTPase family. UreG subfamily. In terms of assembly, homodimer. UreD, UreF and UreG form a complex that acts as a GTP-hydrolysis-dependent molecular chaperone, activating the urease apoprotein by helping to assemble the nickel containing metallocenter of UreC. The UreE protein probably delivers the nickel.

It is found in the cytoplasm. Functionally, facilitates the functional incorporation of the urease nickel metallocenter. This process requires GTP hydrolysis, probably effectuated by UreG. The protein is Urease accessory protein UreG of Mycobacterium sp. (strain JLS).